Here is an 800-residue protein sequence, read N- to C-terminus: Cation/H(+) antiporter 9 (800 aa).

A run of 12 helical transmembrane segments spans residues 43-63, 73-93, 110-130, 145-165, 186-206, 216-236, 247-267, 287-306, 338-358, 371-391, 401-421, and 430-450; these read VIFG…FVCI, IGIP…PQLL, NVAL…LMGV, IVIA…FRNF, VIVS…VYEL, IAIS…VCIS, GIAN…LFIF, VYLY…LSVF, LVTN…ADVV, ILLL…PCLI, VIIA…FDVA, and ATYT…PTII.

The protein belongs to the monovalent cation:proton antiporter 2 (CPA2) transporter (TC 2.A.37) family. CHX (TC 2.A.37.4) subfamily.

The protein localises to the membrane. Functionally, may operate as a cation/H(+) antiporter. This is Cation/H(+) antiporter 9 (CHX9) from Arabidopsis thaliana (Mouse-ear cress).